We begin with the raw amino-acid sequence, 279 residues long: Acyl-coenzyme A thioesterase MBLAC2 (279 aa).

Ser2 bears the N-acetylserine mark. The Zn(2+) site is built by His83, His85, Asp87, His88, His170, Asp189, and His231. Cys254 carries the S-palmitoyl cysteine lipid modification.

This sequence belongs to the metallo-beta-lactamase superfamily. Glyoxalase II family. The cofactor is Zn(2+). In terms of processing, palmitoylated on Cys-254 by ZDHHC20.

Its subcellular location is the endoplasmic reticulum membrane. It is found in the cell membrane. The catalysed reaction is hexadecanoyl-CoA + H2O = hexadecanoate + CoA + H(+). It carries out the reaction dodecanoyl-CoA + H2O = dodecanoate + CoA + H(+). The enzyme catalyses tetradecanoyl-CoA + H2O = tetradecanoate + CoA + H(+). It catalyses the reaction octadecanoyl-CoA + H2O = octadecanoate + CoA + H(+). The catalysed reaction is a beta-lactam + H2O = a substituted beta-amino acid. Its activity is regulated as follows. Beta-lactamase activity is inhibited by sulbactam. In terms of biological role, acyl-CoA thioesterases are a group of enzymes that catalyze the hydrolysis of acyl-CoAs to the free fatty acid and coenzyme A (CoASH), providing the potential to regulate intracellular levels of acyl-CoAs, free fatty acids and CoASH. Has an acyl-CoA thioesterase activity towards the long chain fatty acyl-CoA thioester palmitoyl-CoA (hexadecanoyl-CoA; C16:0-CoA). Displays a substrate preference for fatty acyl-CoAs with chain-lengths C12-C18. Possesses beta-lactamase activity, catalyzing the hydrolysis of penicillin G and nitrocefin. Exhibits no activity towards other beta-lactam antibiotic classes including cephalosporins (cefotaxime) and carbapenems (imipenem). The protein is Acyl-coenzyme A thioesterase MBLAC2 (MBLAC2) of Homo sapiens (Human).